A 383-amino-acid chain; its full sequence is Ovalbumin (383 aa).

Position 2 is an N-acetylglycine (Gly-2). A signal peptide (not cleaved) is located at residues 22–48 (HHANDNMLYSPFAILSTLAMVFLGAKD). Phosphoserine is present on Ser-69. Residues Cys-74 and Cys-121 are joined by a disulfide bond. N-linked (GlcNAc...) asparagine glycosylation is found at Asn-293 and Asn-312. Position 345 is a phosphoserine (Ser-345).

The protein belongs to the serpin family. Ov-serpin subfamily. Post-translationally, the signal sequence is not cleaved. The functional signal for membrane translocation of ovalbumin becomes accessible when the nascent chain is 50 to 60 residues long. The hydrophobic sequence which lies between residues 27 and 43 folds back on the preceding residues to form an amphipathic hairpin structure which is the signal element recognized by the membrane. As to expression, major protein of egg white.

It localises to the secreted. Storage protein of egg white. Lack protease inhibitory activity. This chain is Ovalbumin (SERPINB14), found in Coturnix coturnix (Common quail).